Consider the following 138-residue polypeptide: Hexon-interlacing protein (138 aa).

The stretch at 100–127 (LLVLLAQLEALTQRLGELSKQVAQLREQ) forms a coiled coil.

The protein belongs to the adenoviridae hexon-interlacing protein family. Homotrimer. Interacts with hexon protein; this interaction tethers the hexons together. Self-interacts with adjacent proteins. Interacts with kinesin light chain KLC1; this interaction leads to capsid disruption at the nuclear pore complex during virus entry into host cell.

The protein resides in the virion. It localises to the host nucleus. Its function is as follows. Structural component of the virion that acts as a cement protein on the capsid exterior and forms triskelion structures consisting of three molecules that stabilize three hexon trimers at the center of each icosahedral facet and fixes the peripentonal hexons. Dispensable for assembly. During virus entry, recruits the anterograde motor kinesin-1 to the capsid docked at the nuclear pore complex thereby subjecting the docked capsid to a pulling force. The resulting tension leads to capsid disruption, dispersion of capsid fragments toward cell periphery and eventually viral DNA entry into the host nucleus. This chain is Hexon-interlacing protein, found in Human adenovirus B serotype 7 (HAdV-7).